The primary structure comprises 120 residues: NAD(P)H-quinone oxidoreductase subunit 3, chloroplastic (120 aa).

Transmembrane regions (helical) follow at residues 9–29 (IFWAFLVISSVIPILAFIISG), 64–84 (MFALVFVVFDVETVFLYPWAM), and 88–108 (VLGVSVFIEALIFVLILIVGS).

Belongs to the complex I subunit 3 family. In terms of assembly, NDH is composed of at least 16 different subunits, 5 of which are encoded in the nucleus.

Its subcellular location is the plastid. It localises to the chloroplast thylakoid membrane. The catalysed reaction is a plastoquinone + NADH + (n+1) H(+)(in) = a plastoquinol + NAD(+) + n H(+)(out). It carries out the reaction a plastoquinone + NADPH + (n+1) H(+)(in) = a plastoquinol + NADP(+) + n H(+)(out). NDH shuttles electrons from NAD(P)H:plastoquinone, via FMN and iron-sulfur (Fe-S) centers, to quinones in the photosynthetic chain and possibly in a chloroplast respiratory chain. The immediate electron acceptor for the enzyme in this species is believed to be plastoquinone. Couples the redox reaction to proton translocation, and thus conserves the redox energy in a proton gradient. This chain is NAD(P)H-quinone oxidoreductase subunit 3, chloroplastic, found in Lemna minor (Common duckweed).